A 203-amino-acid polypeptide reads, in one-letter code: NAD(P)H-quinone oxidoreductase subunit I (203 aa).

4Fe-4S ferredoxin-type domains are found at residues 55–84 (GRIHFEFDKCIACEVCVRVCPINLPVVDWE) and 95–124 (KHYSIDFGVCIFCGNCVEYCPTNCLSMTEE). 8 residues coordinate [4Fe-4S] cluster: C64, C67, C70, C74, C104, C107, C110, and C114.

This sequence belongs to the complex I 23 kDa subunit family. NDH-1 is composed of at least 11 different subunits. Requires [4Fe-4S] cluster as cofactor.

Its subcellular location is the cellular thylakoid membrane. It catalyses the reaction a plastoquinone + NADH + (n+1) H(+)(in) = a plastoquinol + NAD(+) + n H(+)(out). The catalysed reaction is a plastoquinone + NADPH + (n+1) H(+)(in) = a plastoquinol + NADP(+) + n H(+)(out). NDH-1 shuttles electrons from an unknown electron donor, via FMN and iron-sulfur (Fe-S) centers, to quinones in the respiratory and/or the photosynthetic chain. The immediate electron acceptor for the enzyme in this species is believed to be plastoquinone. Couples the redox reaction to proton translocation, and thus conserves the redox energy in a proton gradient. This chain is NAD(P)H-quinone oxidoreductase subunit I (ndhI), found in Picosynechococcus sp. (strain ATCC 27264 / PCC 7002 / PR-6) (Agmenellum quadruplicatum).